A 165-amino-acid chain; its full sequence is Protein SprT (165 aa).

The SprT-like domain occupies 20 to 163 (EKLAQANLKL…RCVHCGEQLV (144 aa)). A Zn(2+)-binding site is contributed by histidine 78. The active site involves glutamate 79. Histidine 82 is a Zn(2+) binding site.

This sequence belongs to the SprT family. Zn(2+) serves as cofactor.

The protein resides in the cytoplasm. The protein is Protein SprT of Escherichia coli O127:H6 (strain E2348/69 / EPEC).